We begin with the raw amino-acid sequence, 506 residues long: Protein EFFECTOR OF TRANSCRIPTION 1 (506 aa).

The GIY-YIG domain occupies 185-225 (AFQGLYELSHDHGRKDDVLVANLGQPESIRSRLRSYSRSFA). The span at 234–247 (LSQTILPTTQNKSD) shows a compositional bias: polar residues. Positions 234–298 (LSQTILPTTQ…VSEKHDDIVD (65 aa)) are disordered. Residues 248 to 272 (NQTEEKKSDSEEEREVSSDAAEKES) show a composition bias toward basic and acidic residues. Residues 273-288 (NSLPSILRLSRSRPQP) show a composition bias toward low complexity. Cx9Cx9RCx2HK repeat units lie at residues 306 to 331 (CGVL…TEHK) and 361 to 386 (CGVI…EDHK). The segment covering 404–413 (KAVNEDKSKP) has biased composition (basic and acidic residues). A disordered region spans residues 404–426 (KAVNEDKSKPETSTGMNQEGSGL). Polar residues predominate over residues 414 to 423 (ETSTGMNQEG). 2 Cx9Cx9RCx2HK repeats span residues 428 to 453 (CEAT…WQHK) and 475 to 500 (CGFK…EEHK).

As to expression, expressed in rosette leaves, stipules, stems, flowers, siliques and mature seeds. Expressed in the vascular bundles of xylem in shoot parenchyma cells. Expressed in the remnant cytoplasm of differentiated fiber cells and in protoxylem element of parenchymal cells.

Its subcellular location is the cytoplasm. It localises to the nucleus. Its function is as follows. Transcriptional regulator involved in the regulation of cell differentiation in meristems. Binds DNA without sequence preference. This Arabidopsis thaliana (Mouse-ear cress) protein is Protein EFFECTOR OF TRANSCRIPTION 1.